The primary structure comprises 222 residues: Sugar fermentation stimulation protein homolog (222 aa).

This sequence belongs to the SfsA family.

The protein is Sugar fermentation stimulation protein homolog of Thermotoga neapolitana (strain ATCC 49049 / DSM 4359 / NBRC 107923 / NS-E).